The following is an 80-amino-acid chain: Defensin-like protein CAL1 (80 aa).

The signal sequence occupies residues 1-31 (MAPSRRMVASAFLLLAILVATEMGTTKVAEA). Disulfide bonds link cysteine 34-cysteine 80, cysteine 45-cysteine 65, cysteine 51-cysteine 74, and cysteine 55-cysteine 76.

This sequence belongs to the DEFL family. Expressed preferentially in root exodermis and xylem parenchyma cells in vasculature of root and flag leaf sheath.

Its subcellular location is the secreted. It localises to the extracellular space. Functionally, plant defensin-like protein involved in accumulation of cadmium (Cd) in rice leaves. Mediates Cd efflux from cytosol into extracellular spaces via chelation. This drives Cd secretion from xylem parenchyma cells into the xylem vessels, hence lowering Cd levels in cytosol meanwhile promoting Cd translocation from roots to shoots. The chain is Defensin-like protein CAL1 from Oryza sativa subsp. japonica (Rice).